The sequence spans 750 residues: Photosystem I P700 chlorophyll a apoprotein A1 (750 aa).

8 consecutive transmembrane segments (helical) span residues 70-93, 156-179, 195-219, 291-309, 346-369, 385-411, 433-455, and 531-549; these read VFSA…FHGA, LYCT…FHYH, LNHH…HVSL, IAHH…GHMY, WHAQ…HHMY, LSLF…IFMV, AIIS…LYIH, and FLVH…LILL. [4Fe-4S] cluster contacts are provided by C573 and C582. The next 2 membrane-spanning stretches (helical) occupy residues 589–610 and 664–686; these read HVFL…HFSW and LSAY…MFLF. H675 is a chlorophyll a' binding site. Residues M683 and Y691 each contribute to the chlorophyll a site. W692 contacts phylloquinone. Residues 724–744 form a helical membrane-spanning segment; sequence AVGVTHYLLGGIATTWAFFLA.

The protein belongs to the PsaA/PsaB family. In terms of assembly, the PsaA/B heterodimer binds the P700 chlorophyll special pair and subsequent electron acceptors. PSI consists of a core antenna complex that captures photons, and an electron transfer chain that converts photonic excitation into a charge separation. The eukaryotic PSI reaction center is composed of at least 11 subunits. Requires P700 is a chlorophyll a/chlorophyll a' dimer, A0 is one or more chlorophyll a, A1 is one or both phylloquinones and FX is a shared 4Fe-4S iron-sulfur center. as cofactor.

The protein localises to the plastid. It is found in the chloroplast thylakoid membrane. The catalysed reaction is reduced [plastocyanin] + hnu + oxidized [2Fe-2S]-[ferredoxin] = oxidized [plastocyanin] + reduced [2Fe-2S]-[ferredoxin]. Its function is as follows. PsaA and PsaB bind P700, the primary electron donor of photosystem I (PSI), as well as the electron acceptors A0, A1 and FX. PSI is a plastocyanin-ferredoxin oxidoreductase, converting photonic excitation into a charge separation, which transfers an electron from the donor P700 chlorophyll pair to the spectroscopically characterized acceptors A0, A1, FX, FA and FB in turn. Oxidized P700 is reduced on the lumenal side of the thylakoid membrane by plastocyanin. This chain is Photosystem I P700 chlorophyll a apoprotein A1, found in Nicotiana sylvestris (Wood tobacco).